The following is a 157-amino-acid chain: Small ribosomal subunit protein uS7 (157 aa).

This sequence belongs to the universal ribosomal protein uS7 family. Part of the 30S ribosomal subunit. Contacts proteins S9 and S11.

In terms of biological role, one of the primary rRNA binding proteins, it binds directly to 16S rRNA where it nucleates assembly of the head domain of the 30S subunit. Is located at the subunit interface close to the decoding center, probably blocks exit of the E-site tRNA. The sequence is that of Small ribosomal subunit protein uS7 from Chlamydia caviae (strain ATCC VR-813 / DSM 19441 / 03DC25 / GPIC) (Chlamydophila caviae).